Reading from the N-terminus, the 269-residue chain is MNRYQTLQKKLVPFKKGCFIPFIILGDPSIEMSLKIIDVLIENGADGLELGFPFSDPLSDGKTIQKAHLRAFSSKMNIYLCFEMLQKIRKKYNTIPIGLLLYANLIFKFGINNFYLKCFNVGIDSVLIADLPVEESNDFRKCAIANNISSVFVCPHDAKKNVIKKISLYSTGYIYLLSRSGVTGTDKKIIVPSLNLIKNLKKITEKLLIQGFGISNSKQIQKIILSGISGVICGSVIIKLIENHFQNEKKMLKNIKRLSRSLKQSTIIF.

Active-site proton acceptor residues include glutamate 49 and aspartate 60.

This sequence belongs to the TrpA family. In terms of assembly, tetramer of two alpha and two beta chains.

The enzyme catalyses (1S,2R)-1-C-(indol-3-yl)glycerol 3-phosphate + L-serine = D-glyceraldehyde 3-phosphate + L-tryptophan + H2O. The protein operates within amino-acid biosynthesis; L-tryptophan biosynthesis; L-tryptophan from chorismate: step 5/5. Functionally, the alpha subunit is responsible for the aldol cleavage of indoleglycerol phosphate to indole and glyceraldehyde 3-phosphate. This chain is Tryptophan synthase alpha chain, found in Buchnera aphidicola subsp. Schlechtendalia chinensis.